Reading from the N-terminus, the 98-residue chain is Transcription elongation factor A protein-like 7 (98 aa).

Positions 1–22 (MQKSCNEKEGKPKGSEAKREDE) are enriched in basic and acidic residues. The disordered stretch occupies residues 1–33 (MQKSCNEKEGKPKGSEAKREDEQPCGALEGQRL). A coiled-coil region spans residues 59 to 89 (GEEMTGEEEEMERCLEEIRSLRKKFRALHSN).

Belongs to the TFS-II family. TFA subfamily.

The protein resides in the nucleus. Its function is as follows. Plays a role in the negative regulation of NF-kappa-B signaling at the basal level by modulating transcriptional activity of NF-kappa-B on its target gene promoters. Associates with cyclin D1 promoter containing Myc E-box sequence and transcriptionally represses cyclin D1 expression. Regulates telomerase reverse transcriptase expression and telomerase activity in both ALT (alternative lengthening of telomeres)and telomerase-positive cell lines. The protein is Transcription elongation factor A protein-like 7 (Tceal7) of Mus musculus (Mouse).